The sequence spans 307 residues: B3 domain-containing protein At5g18000 (307 aa).

A DNA-binding region (TF-B3 1) is located at residues 20–115; that stretch reads FFKILRREDH…CFNVTIFEAD (96 aa). Disordered stretches follow at residues 122–141 and 151–209; these read PRKT…RKSI and IESW…SEAG. Residues 166-177 show a composition bias toward polar residues; the sequence is ESTSGRLTQKQE. Residues 178–192 show a composition bias toward basic and acidic residues; the sequence is LNLRKKEADKTEKSK. Positions 214 to 307 form a DNA-binding region, TF-B3 2; it reads IPEFKLTIKK…TEMRVKVSKE (94 aa).

The protein resides in the nucleus. This chain is B3 domain-containing protein At5g18000, found in Arabidopsis thaliana (Mouse-ear cress).